The primary structure comprises 326 residues: DNA repair protein RAD51 homolog 4 (326 aa).

Residues 1–83 form a preferentially binds ssDNA region; the sequence is MGVLRAGLCP…ELKTSTAILS (83 aa). 107–114 is an ATP binding site; sequence GAPGSGKT.

Belongs to the RecA family. RAD51 subfamily. As to quaternary structure, part of the BCDX2 complex consisting of RAD51B, RAD51C, RAD51D and XRCC2; the complex has a ring-like structure arranged into a flat disc around a central channel. In the absence of DNA, the BCDX2 subcomplex XRCC2:RAD51D formed a multimeric ring structure; in the presence of single-stranded DNA it formed a filamentous structure with the ssDNA. Interacts with SWSAP1 and ZSWIM7; involved in homologous recombination repair. Interacts with BLM; required for stimulation of BLM activity by the BCDX2 subcomplex XRCC2:RAD51D.

Its subcellular location is the nucleus. In terms of biological role, involved in the homologous recombination repair (HRR) pathway of double-stranded DNA breaks arising during DNA replication or induced by DNA-damaging agents. Bind to single-stranded DNA (ssDNA) and has DNA-dependent ATPase activity. Part of the RAD51 paralog protein complex BCDX2 which acts in the BRCA1-BRCA2-dependent HR pathway. Upon DNA damage, BCDX2 acts downstream of BRCA2 recruitment and upstream of RAD51 recruitment. BCDX2 binds predominantly to the intersection of the four duplex arms of the Holliday junction and to junction of replication forks. The BCDX2 complex was originally reported to bind single-stranded DNA, single-stranded gaps in duplex DNA and specifically to nicks in duplex DNA. Involved in telomere maintenance. The BCDX2 subcomplex XRCC2:RAD51D can stimulate Holliday junction resolution by BLM. This is DNA repair protein RAD51 homolog 4 (RAD51D) from Bos taurus (Bovine).